The primary structure comprises 421 residues: Vasopressin V1b receptor (421 aa).

Over Met-1 to Lys-35 the chain is Extracellular. A glycan (N-linked (GlcNAc...) asparagine) is linked at Asn-21. A helical membrane pass occupies residues Val-36–Leu-59. Over Gly-60–Leu-71 the chain is Cytoplasmic. A helical transmembrane segment spans residues Phe-72–Leu-93. At Trp-94–Arg-108 the chain is on the extracellular side. Cys-107 and Cys-186 are joined by a disulfide. The helical transmembrane segment at Ala-109–Leu-130 threads the bilayer. Residues Asp-131–Tyr-151 lie on the Cytoplasmic side of the membrane. The chain crosses the membrane as a helical span at residues Pro-152–Ser-173. Topologically, residues Leu-174–Trp-202 are extracellular. Residues Thr-203 to Cys-223 form a helical membrane-spanning segment. The Cytoplasmic segment spans residues His-224–Thr-280. The chain crosses the membrane as a helical span at residues Phe-281–Trp-300. Residues Ser-301 to Thr-318 are Extracellular-facing. Residues Ile-319–Phe-338 traverse the membrane as a helical segment. Residues Asn-339–Ser-421 are Cytoplasmic-facing. The interval Lys-399 to Ser-421 is disordered.

The protein belongs to the G-protein coupled receptor 1 family. Vasopressin/oxytocin receptor subfamily.

The protein resides in the cell membrane. Functionally, receptor for arginine vasopressin. The activity of this receptor is mediated by G proteins which activate a phosphatidyl-inositol-calcium second messenger system. In Mus musculus (Mouse), this protein is Vasopressin V1b receptor (Avpr1b).